Consider the following 313-residue polypeptide: Antiviral protein I (313 aa).

An N-terminal signal peptide occupies residues M1–A22. 2 disulfide bridges follow: C56–C281 and C107–C128. Y94 is an active-site residue. A substrate-binding site is contributed by V95. Position 143 (S143) interacts with substrate. Y145 is an active-site residue. S197 serves as a coordination point for substrate. Residues E198 and R201 contribute to the active site. Residue R201 participates in substrate binding. The propeptide occupies N286–F313.

Belongs to the ribosome-inactivating protein family. Type 1 RIP subfamily. Monomer. In terms of tissue distribution, expressed in spring leaves (at protein level). Expressed in roots (at protein level).

It catalyses the reaction Endohydrolysis of the N-glycosidic bond at one specific adenosine on the 28S rRNA.. In terms of biological role, possesses antiviral potency. Inhibits viral infection of plants (tobacco mosaic virus). Inhibits protein synthesis. Releases both adenine and guanine from Escherichia coli rRNA in vitro. Activity on guanine is 20 times slower than that on adenine. The protein is Antiviral protein I (PAP1) of Phytolacca americana (American pokeweed).